The sequence spans 387 residues: Small ribosomal subunit protein uS5m (387 aa).

A mitochondrion-targeting transit peptide spans 1–22 (MLRSFSHFLQIGSRRQPTYFRC). The tract at residues 33-87 (FKNDPKKELNSNLNEKSVEESSKNETKEQFNSSSIPRESESEGKTASNTSPLSPK) is disordered. Basic and acidic residues predominate over residues 48–60 (KSVEESSKNETKE). Ser-85 carries the phosphoserine modification. The S5 DRBM domain occupies 225–288 (LMFVPLVRRR…GRAVKNMVYI (64 aa)).

The protein belongs to the universal ribosomal protein uS5 family. In terms of assembly, component of the mitochondrial small ribosomal subunit (mt-SSU). Mature yeast 74S mitochondrial ribosomes consist of a small (37S) and a large (54S) subunit. The 37S small subunit contains a 15S ribosomal RNA (15S mt-rRNA) and at least 32 different proteins. The 54S large subunit contains a 21S rRNA (21S mt-rRNA) and at least 45 different proteins. uS3m, uS4m and uS5m form the narrow entry site of the mRNA channel.

The protein resides in the mitochondrion. Its function is as follows. Component of the mitochondrial ribosome (mitoribosome), a dedicated translation machinery responsible for the synthesis of mitochondrial genome-encoded proteins, including at least some of the essential transmembrane subunits of the mitochondrial respiratory chain. The mitoribosomes are attached to the mitochondrial inner membrane and translation products are cotranslationally integrated into the membrane. This chain is Small ribosomal subunit protein uS5m (mrp5), found in Schizosaccharomyces pombe (strain 972 / ATCC 24843) (Fission yeast).